We begin with the raw amino-acid sequence, 693 residues long: Polyribonucleotide nucleotidyltransferase (693 aa).

Residues Asp-486 and Asp-492 each coordinate Mg(2+). Residues 553–612 form the KH domain; the sequence is PRFSSMRIDTEKIKDVIGKGGATIRSITEQTGTTIEIEDDGSVKIAATDKAAAANARRLI. Residues 622-690 form the S1 motif domain; it reads GRIYDAKVTK…RQGRVRLSIK (69 aa).

The protein belongs to the polyribonucleotide nucleotidyltransferase family. As to quaternary structure, component of the RNA degradosome, which is a multiprotein complex involved in RNA processing and mRNA degradation. Requires Mg(2+) as cofactor.

Its subcellular location is the cytoplasm. It carries out the reaction RNA(n+1) + phosphate = RNA(n) + a ribonucleoside 5'-diphosphate. Functionally, involved in mRNA degradation. Catalyzes the phosphorolysis of single-stranded polyribonucleotides processively in the 3'- to 5'-direction. In Dichelobacter nodosus (strain VCS1703A), this protein is Polyribonucleotide nucleotidyltransferase.